Here is a 562-residue protein sequence, read N- to C-terminus: Tubby-related protein 2 (562 aa).

The segment at 1–81 (MDREGPRGPR…RRGEERFQSD (81 aa)) is disordered. The segment covering 35-46 (QKLEQQRQLFEK) has biased composition (basic and acidic residues). Ser152, Ser153, and Ser155 each carry phosphoserine. Residues 179–294 (LRRGWLASPG…SNHNAWNMTC (116 aa)) are disordered. Thr211 bears the Phosphothreonine mark. Ser213 bears the Phosphoserine mark. The segment covering 225–240 (DGDHGDLAPCKVEENT) has biased composition (basic and acidic residues). The span at 285-294 (SNHNAWNMTC) shows a compositional bias: polar residues.

The protein belongs to the TUB family. As to expression, expressed in retina and testis.

Its subcellular location is the cytoplasm. It is found in the secreted. The protein is Tubby-related protein 2 (Tulp2) of Mus musculus (Mouse).